A 53-amino-acid chain; its full sequence is Serine rich endogenous peptide 3 (53 aa).

The N-terminal stretch at 1-26 is a signal peptide; it reads MTKKGPLNLRLLLLLLVVLLPSCSNC. The SCOOP motif signature appears at 37 to 53; sequence SSEWRRKMITVWSKSSY. The SxS motif essential for MIK2 binding motif lies at 49 to 51; it reads SKS.

Belongs to the serine rich endogenous peptide (SCOOP) phytocytokine family. In terms of assembly, interacts with MIK2 (via extracellular leucine-rich repeat domain); this interaction triggers the formation of complex between MIK2 and the BAK1/SERK3 and SERK4 coreceptors, and subsequent BAK1 activation by phosphorylation.

Its subcellular location is the cell membrane. It is found in the secreted. The protein resides in the extracellular space. The protein localises to the apoplast. Its function is as follows. Brassicaceae-specific phytocytokine (plant endogenous peptide released into the apoplast) perceived by MIK2 in a BAK1/SERK3 and SERK4 coreceptors-dependent manner, that modulates various physiological and antimicrobial processes including growth prevention and reactive oxygen species (ROS) response regulation. In Arabidopsis thaliana (Mouse-ear cress), this protein is Serine rich endogenous peptide 3.